A 356-amino-acid chain; its full sequence is Tyrosine recombinase XerS (356 aa).

The region spanning 16-121 (IMPWYVLDYY…ALSSLYKYLT (106 aa)) is the Core-binding (CB) domain. The 186-residue stretch at 169 to 354 (AFLDYVDKEY…VNDEQKNALD (186 aa)) folds into the Tyr recombinase domain. Active-site residues include Arg210, Lys234, His306, Arg309, and His332. The active-site O-(3'-phospho-DNA)-tyrosine intermediate is the Tyr341.

This sequence belongs to the 'phage' integrase family. XerS subfamily.

The protein localises to the cytoplasm. FtsK is required for recombination. In terms of biological role, site-specific tyrosine recombinase, which acts by catalyzing the cutting and rejoining of the recombining DNA molecules. Essential to convert dimers of the bacterial chromosome into monomers to permit their segregation at cell division. In Streptococcus equi subsp. equi (strain 4047), this protein is Tyrosine recombinase XerS.